Here is a 92-residue protein sequence, read N- to C-terminus: MQKTSIVAFRRGYRLQWEAAQESHVILYPEGMAKLNETAAAILELVDGRRDVAAIIAMLNERFPEAGGVDDDVVEFLQIACQQKWITCREPE.

This sequence belongs to the PqqD family. In terms of assembly, monomer. Interacts with PqqE.

The protein operates within cofactor biosynthesis; pyrroloquinoline quinone biosynthesis. In terms of biological role, functions as a PqqA binding protein and presents PqqA to PqqE, in the pyrroloquinoline quinone (PQQ) biosynthetic pathway. The sequence is that of PqqA binding protein from Klebsiella pneumoniae (strain 342).